A 92-amino-acid polypeptide reads, in one-letter code: Small ribosomal subunit protein uS19 (92 aa).

The protein belongs to the universal ribosomal protein uS19 family.

Its function is as follows. Protein S19 forms a complex with S13 that binds strongly to the 16S ribosomal RNA. In Shewanella putrefaciens (strain CN-32 / ATCC BAA-453), this protein is Small ribosomal subunit protein uS19.